The following is a 675-amino-acid chain: Pesticidal crystal protein Cry25Aa (675 aa).

The protein belongs to the delta endotoxin family.

Functionally, promotes colloidosmotic lysis by binding to the midgut epithelial cells of insects. In Bacillus thuringiensis subsp. jegathesan, this protein is Pesticidal crystal protein Cry25Aa (cry25Aa).